The following is a 425-amino-acid chain: Secernin-2 (425 aa).

Cys12 is a catalytic residue. A Phosphothreonine modification is found at Thr52.

Belongs to the peptidase C69 family. Secernin subfamily.

The protein is Secernin-2 (SCRN2) of Homo sapiens (Human).